Consider the following 624-residue polypeptide: tRNA uridine 5-carboxymethylaminomethyl modification enzyme MnmG (624 aa).

Residues 14–19 (GGGHAG), Val126, and Ser181 each bind FAD. 273-287 (GPRYCPSIEDKVVRF) is an NAD(+) binding site. Gln370 provides a ligand contact to FAD.

This sequence belongs to the MnmG family. Homodimer. Heterotetramer of two MnmE and two MnmG subunits. FAD serves as cofactor.

It localises to the cytoplasm. Functionally, NAD-binding protein involved in the addition of a carboxymethylaminomethyl (cmnm) group at the wobble position (U34) of certain tRNAs, forming tRNA-cmnm(5)s(2)U34. This Geotalea uraniireducens (strain Rf4) (Geobacter uraniireducens) protein is tRNA uridine 5-carboxymethylaminomethyl modification enzyme MnmG.